Here is a 433-residue protein sequence, read N- to C-terminus: Serine--tRNA ligase (433 aa).

T239 to E241 contacts L-serine. R270 to E272 serves as a coordination point for ATP. E293 lines the L-serine pocket. E357 to S360 contributes to the ATP binding site. An L-serine-binding site is contributed by S393.

The protein belongs to the class-II aminoacyl-tRNA synthetase family. Type-1 seryl-tRNA synthetase subfamily. In terms of assembly, homodimer. The tRNA molecule binds across the dimer.

It localises to the cytoplasm. The enzyme catalyses tRNA(Ser) + L-serine + ATP = L-seryl-tRNA(Ser) + AMP + diphosphate + H(+). The catalysed reaction is tRNA(Sec) + L-serine + ATP = L-seryl-tRNA(Sec) + AMP + diphosphate + H(+). Its pathway is aminoacyl-tRNA biosynthesis; selenocysteinyl-tRNA(Sec) biosynthesis; L-seryl-tRNA(Sec) from L-serine and tRNA(Sec): step 1/1. In terms of biological role, catalyzes the attachment of serine to tRNA(Ser). Is also able to aminoacylate tRNA(Sec) with serine, to form the misacylated tRNA L-seryl-tRNA(Sec), which will be further converted into selenocysteinyl-tRNA(Sec). This is Serine--tRNA ligase from Sorangium cellulosum (strain So ce56) (Polyangium cellulosum (strain So ce56)).